We begin with the raw amino-acid sequence, 481 residues long: Ribulose bisphosphate carboxylase large chain (481 aa).

Positions Met-1–Ser-2 are excised as a propeptide. The residue at position 3 (Pro-3) is an N-acetylproline. An N6,N6,N6-trimethyllysine modification is found at Lys-14. Substrate contacts are provided by Asn-123 and Thr-173. Lys-175 functions as the Proton acceptor in the catalytic mechanism. Lys-177 contacts substrate. Lys-201, Asp-203, and Glu-204 together coordinate Mg(2+). Position 201 is an N6-carboxylysine (Lys-201). Catalysis depends on His-294, which acts as the Proton acceptor. The substrate site is built by Arg-295, His-327, and Ser-379.

The protein belongs to the RuBisCO large chain family. Type I subfamily. In terms of assembly, heterohexadecamer of 8 large chains and 8 small chains; disulfide-linked. The disulfide link is formed within the large subunit homodimers. The cofactor is Mg(2+). Post-translationally, the disulfide bond which can form in the large chain dimeric partners within the hexadecamer appears to be associated with oxidative stress and protein turnover.

Its subcellular location is the plastid. It carries out the reaction 2 (2R)-3-phosphoglycerate + 2 H(+) = D-ribulose 1,5-bisphosphate + CO2 + H2O. The enzyme catalyses D-ribulose 1,5-bisphosphate + O2 = 2-phosphoglycolate + (2R)-3-phosphoglycerate + 2 H(+). Its function is as follows. RuBisCO catalyzes two reactions: the carboxylation of D-ribulose 1,5-bisphosphate, the primary event in carbon dioxide fixation, as well as the oxidative fragmentation of the pentose substrate in the photorespiration process. Both reactions occur simultaneously and in competition at the same active site. This is Ribulose bisphosphate carboxylase large chain from Cuscuta gronovii (Common dodder).